A 438-amino-acid chain; its full sequence is Battenin (438 aa).

Positions 1–29 (MGGCAGSRRRLLDSEEEETAPEPRPPRSY) are disordered. Topologically, residues 1–37 (MGGCAGSRRRLLDSEEEETAPEPRPPRSYHKGALWKN) are cytoplasmic. S14 is subject to Phosphoserine. A helical membrane pass occupies residues 38 to 58 (VMGFWLLGLCNNFSYVVMLSA). Residues 59–127 (AHDILSHQRA…GLHLLPYSPR (69 aa)) are Lumenal-facing. Residues 68–89 (ASGNQSHVDPDPPPTAHNSSSR) are disordered. N-linked (GlcNAc...) asparagine glycosylation is found at N71 and N85. A helical transmembrane segment spans residues 128–148 (VLVSGICAAGSFILVAFSHSV). The Cytoplasmic portion of the chain corresponds to 149–151 (GTS). The chain crosses the membrane as a helical span at residues 152–172 (LCGVVLASISSGVGEVTFLSL). Topologically, residues 173–182 (TAFYPRAVIS) are lumenal. A helical transmembrane segment spans residues 183–203 (WWSSGTGGAGLMGALSYLGLT). Residues 204-277 (QAGLSPQHTL…NLSLQERWTV (74 aa)) lie on the Cytoplasmic side of the membrane. Residues 236–267 (PQDPGGEEEAETSARQPLIDSETPESKPDSSS) form a disordered region. A Lysosomal targeting motif motif is present at residues 242-244 (EEE). Positions 253-254 (LI) match the Lysosomal targeting motif. Required for AP1G1, AP2A2 and AP3D1 interaction motif. A helical transmembrane segment spans residues 278-298 (FKGLLWYIVPLVLVYFAEYFI). The Lumenal portion of the chain corresponds to 299–346 (NQGLFELLFFRNTSLNHAQQYRWYQMLYQAGVFVSRSSLHCCRIRFTW). N-linked (GlcNAc...) asparagine glycosylation is present at N310. Residues 347–367 (VLALLQCLNLAFLLVDVWFSF) traverse the membrane as a helical segment. The Cytoplasmic portion of the chain corresponds to 368–438 (LPSIYLVFLI…PLHDFLCHLS (71 aa)). The short motif at 409–419 (MAAACISDTLG) is the Lysosomal targeting motif element. C435 bears the Cysteine methyl ester mark. C435 carries the S-farnesyl cysteine lipid modification. The propeptide at 436-438 (HLS) is removed in mature form.

Belongs to the battenin family. Interacts with DCTN1, KIF3A, RAB7A and RILP. Interacts with CLN5. In terms of processing, highly glycosylated. Post-translationally, farnesylation is important for trafficking to lysosomes.

The protein localises to the lysosome membrane. The protein resides in the late endosome. It localises to the lysosome. In terms of biological role, mediates microtubule-dependent, anterograde transport connecting the Golgi network, endosomes, autophagosomes, lysosomes and plasma membrane, and participates in several cellular processes such as regulation of lysosomal pH, lysosome protein degradation, receptor-mediated endocytosis, autophagy, transport of proteins and lipids from the TGN, apoptosis and synaptic transmission. Facilitates the proteins transport from trans-Golgi network (TGN)-to other membrane compartments such as transport of microdomain-associated proteins to the plasma membrane, IGF2R transport to the lysosome where it regulates the CTSD release leading to regulation of CTSD maturation and thereby APP intracellular processing. Moreover regulates CTSD activity in response to osmotic stress. Also binds galactosylceramide and transports it from the trans Golgi to the rafts, which may have immediate and downstream effects on cell survival by modulating ceramide synthesis. At the plasma membrane, regulates actin-dependent events including filopodia formation, cell migration, and pinocytosis through ARF1-CDC42 pathway and also the cytoskeleton organization through interaction with MYH10 and fodrin leading to the regulation of the plasma membrane association of Na+, K+ ATPase complex. Regulates synaptic transmission in the amygdala, hippocampus, and cerebellum through regulation of synaptic vesicles density and their proximity to active zones leading to modulation of short-term plasticity and age-dependent anxious behavior, learning and memory. Regulates autophagic vacuoles (AVs) maturation by modulating the trafficking between endocytic and autophagolysosomal/lysosomal compartments, which involves vesicle fusion leading to regulation of degradation process. Also participates in cellular homeostasis of compounds such as, water, ions, amino acids, proteins and lipids in several tissue namely in brain and kidney through regulation of their transport and synthesis. This Canis lupus familiaris (Dog) protein is Battenin.